A 1770-amino-acid polypeptide reads, in one-letter code: MESQQLHQNPHSLHGSAYASVTSKEVPSNQDPLAVSASNLPEFDRDSTKVNSQQETTPGTSAVPENHHHVSPQPASVPPPQNGQYQQHGMMTPNKAMASNWAHYQQPSMMTCSHYQTSPAYYQPDPHYPLPQYIPPLSTSSPDPIDLKNQHSEIPQAKTKVGNNVLPPHTLTSEENFSTWVKFYIRFLKNSNLGDIIPNDQGEIKRQMTYEEHAYIYNTFQAFAPFHLLPTWVKQILEINYADILTVLCKSVSKMQTNNQELKDWIALANLEYDGSTSADTFEITVSTIIQRLKENNINVSDRLACQLILKGLSGDFKYLRNQYRTKTNMKLSQLFAEIQLIYDENKIMNLNKPSQYKQHSEYKNVSRTSPNTTNTKVTTRNYHRTNSSKPRAAKAHNIATSSKFSRVNNDHINESTVSSQYLSDDNELSLGQQQKESKPTHTIDSNDELPDHLLIDSGASQTLVRSAHYLHHATPNSEINIVDAQKQDIPINAIGNLHFNFQNGTKTSIKALHTPNIAYDLLSLSELANQNITACFTRNTLERSDGTVLAPIVKHGDFYWLSKKYLIPSHISKLTINNVNKSKSVNKYPYPLIHRMLGHANFRSIQKSLKKNAVTYLKESDIEWSNASTYQCPDCLIGKSTKHRHVKGSRLKYQESYEPFQYLHTDIFGPVHHLPKSAPSYFISFTDEKTRFQWVYPLHDRREESILNVFTSILAFIKNQFNARVLVIQMDRGSEYTNKTLHKFFTNRGITACYTTTADSRAHGVAERLNRTLLNDCRTLLHCSGLPNHLWFSAVEFSTIIRNSLVSPKNDKSARQHAGLAGLDITTILPFGQPVIVNNHNPDSKIHPRGIPGYALHPSRNSYGYIIYLPSLKKTVDTTNYVILQDNQSKLDQFNYDTLTFDDDLNRLTAHNQSFIEQNETEQSYDQNTESDHDYQSEIEINSDPLVNDFSSQSMNPLQLDHEPVQKVRAPKEVDADISEYNILPSPVRSRTPHIINKESTEMGGTIESDTTSPRHSSTFTARNQKRPGSPNDMIDLTSQDRVNYGLENIKTTRLGGTEEPYIQRNSDTNIKYRTTNSTPSIDDRSSNSESTTPIISIETKAVCDNTPSIDTDPPEYRSSDHATPNIMPDKSSKNVTADSILDDLPLPDLTHKSPTDTSDVSKDIPHIHSRQTNSSLGGMDDSNVLTTTKSKKRSLEDNETEIEVSRDTWNNKNMRSLEPPRSKKRINLIAAIKGVKSIKPVRTTLRYDEAITYNKDNKEKDRYVEAYHKEISQLLKMNTWDTNKYYDRNDIDPKKVINSMFIFNKKRDGTHKARFVARGDIQHPDTYDSDMQSNTVHHYALMTSLSIALDNDYYITQLDISSAYLYADIKEELYIRPPPHLGLNDKLLRLRKSLYGLKQSGANWYETIKSYLINCCDMQEVRGWSCVFKNSQVTICLFVDDMILFSKDLNANKKIITTLKKQYDTKIINLGERDNEIQYDILGLEIKYQRSKYMKLGMEKSLTEKLPKLNVPLNPKGKKLRAPGQPGHYIDQDELEIDEDEYKEKVHEMQKLIGLASYVGYKFRFDLLYYINTLAQHILFPSRQVLDMTYELIQFMWDTRDKQLIWHKNKPTKPDNKLVAISDASYGNQPYYKSQIGNIFLLNGKVIGGKSTKASLTCTSTTEAEIHAVSEAIPLLNNLSHLVQELNKKPIIKGLLTDSRSTISIIKSTNEEKFRNRFFGTKAMRLRDEVSGNNLYVYYIETKKNIADVMTKPLPIKTFKLLTNKWIH.

Polar residues-rich tracts occupy residues M1–H11, A19–N39, and K49–T60. Disordered regions lie at residues M1 to Q86 and Q359 to H453. Residues E295–H397 are RNA-binding. Over residues T369–R381 the composition is skewed to low complexity. Composition is skewed to polar residues over residues I399 to V408 and E415 to Q435. D457 acts as the For protease activity; shared with dimeric partner in catalysis. Residues N579–C636 form an integrase-type zinc finger-like region. Residues E656 to P831 form the Integrase catalytic domain. Residues D667 and D732 each coordinate Mg(2+). Disordered regions lie at residues G1005–L1038, G1058–K1135, L1146–D1165, and H1170–E1205. 2 stretches are compositionally biased toward polar residues: residues E1009–R1024 and Q1065–S1082. Residues L1151–D1165 are compositionally biased toward basic and acidic residues. The Bipartite nuclear localization signal signature appears at K1193 to R1227. The region spanning N1353–Q1491 is the Reverse transcriptase Ty1/copia-type domain. Mg(2+) contacts are provided by D1361, D1442, D1443, D1625, E1667, and D1700. In terms of domain architecture, RNase H Ty1/copia-type spans D1625 to K1767.

The capsid protein forms a homotrimer, from which the VLPs are assembled. The protease is a homodimer, whose active site consists of two apposed aspartic acid residues. Initially, virus-like particles (VLPs) are composed of the structural unprocessed proteins Gag and Gag-Pol, and also contain the host initiator methionine tRNA (tRNA(i)-Met) which serves as a primer for minus-strand DNA synthesis, and a dimer of genomic Ty RNA. Processing of the polyproteins occurs within the particle and proceeds by an ordered pathway, called maturation. First, the protease (PR) is released by autocatalytic cleavage of the Gag-Pol polyprotein, and this cleavage is a prerequisite for subsequent processing at the remaining sites to release the mature structural and catalytic proteins. Maturation takes place prior to the RT reaction and is required to produce transposition-competent VLPs.

The protein localises to the cytoplasm. Its subcellular location is the nucleus. It catalyses the reaction DNA(n) + a 2'-deoxyribonucleoside 5'-triphosphate = DNA(n+1) + diphosphate. It carries out the reaction Endonucleolytic cleavage to 5'-phosphomonoester.. Functionally, capsid protein (CA) is the structural component of the virus-like particle (VLP), forming the shell that encapsulates the retrotransposons dimeric RNA genome. The particles are assembled from trimer-clustered units and there are holes in the capsid shells that allow for the diffusion of macromolecules. CA also has nucleocapsid-like chaperone activity, promoting primer tRNA(i)-Met annealing to the multipartite primer-binding site (PBS), dimerization of Ty2 RNA and initiation of reverse transcription. The aspartyl protease (PR) mediates the proteolytic cleavages of the Gag and Gag-Pol polyproteins after assembly of the VLP. In terms of biological role, reverse transcriptase/ribonuclease H (RT) is a multifunctional enzyme that catalyzes the conversion of the retro-elements RNA genome into dsDNA within the VLP. The enzyme displays a DNA polymerase activity that can copy either DNA or RNA templates, and a ribonuclease H (RNase H) activity that cleaves the RNA strand of RNA-DNA heteroduplexes during plus-strand synthesis and hydrolyzes RNA primers. The conversion leads to a linear dsDNA copy of the retrotransposon that includes long terminal repeats (LTRs) at both ends. Its function is as follows. Integrase (IN) targets the VLP to the nucleus, where a subparticle preintegration complex (PIC) containing at least integrase and the newly synthesized dsDNA copy of the retrotransposon must transit the nuclear membrane. Once in the nucleus, integrase performs the integration of the dsDNA into the host genome. This Saccharomyces cerevisiae (strain ATCC 204508 / S288c) (Baker's yeast) protein is Transposon Ty2-LR1 Gag-Pol polyprotein (TY2B-LR1).